Here is a 67-residue protein sequence, read N- to C-terminus: Type 3 secretion system chaperone PscE (67 aa).

A coiled-coil region spans residues 16 to 37 (HAAALRQRLQAALAECRRELAR).

This sequence belongs to the YscE family. Forms a stable ternary complex with PscF/SctF and PscG within the cytoplasm. Co-stabilized by PscG.

The protein localises to the cytoplasm. Chaperone of the type III secretion system (T3SS), also called injectisome, which is used to inject bacterial effector proteins into eukaryotic host cells, facilitating the establishment and dissemination of infection. Along with PscG, prevents premature polymerization of the PscF/SctF needle protein within the cytoplasm. Required for type III secretion needle assembly. Also required for cytotoxicity by influencing PscF/SctF levels. This chain is Type 3 secretion system chaperone PscE (pscE), found in Pseudomonas aeruginosa (strain ATCC 15692 / DSM 22644 / CIP 104116 / JCM 14847 / LMG 12228 / 1C / PRS 101 / PAO1).